Consider the following 443-residue polypeptide: Mitochondrial enolase superfamily member 1 (443 aa).

Substrate-binding positions include 24–26 (GSD) and tyrosine 34. Serine 148 carries the post-translational modification Phosphoserine. Residue lysine 220 participates in substrate binding. Lysine 222 functions as the Proton donor/acceptor in the catalytic mechanism. Aspartate 250 contacts Mg(2+). Residues asparagine 252, glutamate 276, glutamate 305, 355 to 357 (HAG), and glutamate 386 each bind substrate. Mg(2+)-binding residues include glutamate 276 and glutamate 305. Histidine 355 is an active-site residue.

The protein belongs to the mandelate racemase/muconate lactonizing enzyme family. ENOSF1 subfamily. Mg(2+) is required as a cofactor. Could be sumoylated.

Its subcellular location is the mitochondrion. It carries out the reaction L-fuconate = 2-dehydro-3-deoxy-L-fuconate + H2O. Its function is as follows. Plays a role in the catabolism of L-fucose, a sugar that is part of the carbohydrates that are attached to cellular glycoproteins. Catalyzes the dehydration of L-fuconate to 2-keto-3-deoxy-L-fuconate by the abstraction of the 2-proton to generate an enediolate intermediate that is stabilized by the magnesium ion. May down-regulate thymidylate synthase activity, possibly already at the RNA level, by promoting the degradation of TYMS mRNA via an antisense RNA-based mechanism. The chain is Mitochondrial enolase superfamily member 1 (ENOSF1) from Bos taurus (Bovine).